We begin with the raw amino-acid sequence, 445 residues long: Tubulin alpha-3 chain (445 aa).

Residues Q11, E72, S141, G145, T146, T180, N207, and N229 each contribute to the GTP site. E72 contributes to the Mg(2+) binding site. E255 is a catalytic residue.

Belongs to the tubulin family. Dimer of alpha and beta chains. A typical microtubule is a hollow water-filled tube with an outer diameter of 25 nm and an inner diameter of 15 nM. Alpha-beta heterodimers associate head-to-tail to form protofilaments running lengthwise along the microtubule wall with the beta-tubulin subunit facing the microtubule plus end conferring a structural polarity. Microtubules usually have 13 protofilaments but different protofilament numbers can be found in some organisms and specialized cells. Interacts with NUM1. The cofactor is Mg(2+).

The protein resides in the cytoplasm. Its subcellular location is the cytoskeleton. It catalyses the reaction GTP + H2O = GDP + phosphate + H(+). Functionally, tubulin is the major constituent of microtubules, a cylinder consisting of laterally associated linear protofilaments composed of alpha- and beta-tubulin heterodimers. Microtubules grow by the addition of GTP-tubulin dimers to the microtubule end, where a stabilizing cap forms. Below the cap, tubulin dimers are in GDP-bound state, owing to GTPase activity of alpha-tubulin. The polypeptide is Tubulin alpha-3 chain (TUB3) (Saccharomyces cerevisiae (strain ATCC 204508 / S288c) (Baker's yeast)).